A 430-amino-acid polypeptide reads, in one-letter code: Adenylosuccinate synthetase (430 aa).

Residues 12 to 18 (GDEGKGK) and 40 to 42 (GHT) each bind GTP. The active-site Proton acceptor is D13. 2 residues coordinate Mg(2+): D13 and G40. IMP is bound by residues 13–16 (DEGK), 38–41 (NAGH), T130, R144, Q224, T239, and R303. The Proton donor role is filled by H41. Residue 299 to 305 (TVTSRKR) coordinates substrate. GTP is bound by residues R305, 331 to 333 (KLD), and 413 to 415 (STS).

Belongs to the adenylosuccinate synthetase family. Homodimer. The cofactor is Mg(2+).

The protein localises to the cytoplasm. It carries out the reaction IMP + L-aspartate + GTP = N(6)-(1,2-dicarboxyethyl)-AMP + GDP + phosphate + 2 H(+). Its pathway is purine metabolism; AMP biosynthesis via de novo pathway; AMP from IMP: step 1/2. Plays an important role in the de novo pathway of purine nucleotide biosynthesis. Catalyzes the first committed step in the biosynthesis of AMP from IMP. The sequence is that of Adenylosuccinate synthetase from Pelagibacter ubique (strain HTCC1062).